We begin with the raw amino-acid sequence, 221 residues long: Ribosomal RNA small subunit methyltransferase G (221 aa).

S-adenosyl-L-methionine-binding positions include Gly85, Leu90, 138–139 (AE), and Arg151.

The protein belongs to the methyltransferase superfamily. RNA methyltransferase RsmG family.

Its subcellular location is the cytoplasm. The enzyme catalyses guanosine(527) in 16S rRNA + S-adenosyl-L-methionine = N(7)-methylguanosine(527) in 16S rRNA + S-adenosyl-L-homocysteine. Functionally, specifically methylates the N7 position of guanine in position 527 of 16S rRNA. This is Ribosomal RNA small subunit methyltransferase G from Caulobacter sp. (strain K31).